A 135-amino-acid polypeptide reads, in one-letter code: Interleukin-4 (135 aa).

A signal peptide spans 1–24 (MGLTSQLIPVLVCLLACTSHFVHG). Cystine bridges form between Cys-27-Cys-135, Cys-48-Cys-85, and Cys-70-Cys-105. N-linked (GlcNAc...) asparagine glycosylation is found at Asn-62 and Asn-96.

It belongs to the IL-4/IL-13 family.

It is found in the secreted. Its function is as follows. Participates in at least several B-cell activation processes as well as of other cell types. It is a costimulator of DNA-synthesis. It induces the expression of class II MHC molecules on resting B-cells. It enhances both secretion and cell surface expression of IgE and IgG1. It also regulates the expression of the low affinity Fc receptor for IgE (CD23) on both lymphocytes and monocytes. Positively regulates IL31RA expression in macrophages. Stimulates autophagy in dendritic cells by interfering with mTORC1 signaling and through the induction of RUFY4. The polypeptide is Interleukin-4 (IL4) (Cervus elaphus (Red deer)).